Consider the following 441-residue polypeptide: Glutamyl-tRNA reductase (441 aa).

Substrate contacts are provided by residues 49 to 52 (TCNR), Ser109, 114 to 116 (EGQ), and Gln120. Cys50 acts as the Nucleophile in catalysis. Residue 198 to 203 (GAGRMS) coordinates NADP(+).

The protein belongs to the glutamyl-tRNA reductase family. Homodimer.

It carries out the reaction (S)-4-amino-5-oxopentanoate + tRNA(Glu) + NADP(+) = L-glutamyl-tRNA(Glu) + NADPH + H(+). It participates in porphyrin-containing compound metabolism; protoporphyrin-IX biosynthesis; 5-aminolevulinate from L-glutamyl-tRNA(Glu): step 1/2. It functions in the pathway porphyrin-containing compound metabolism; chlorophyll biosynthesis. Functionally, catalyzes the NADPH-dependent reduction of glutamyl-tRNA(Glu) to glutamate 1-semialdehyde (GSA). This chain is Glutamyl-tRNA reductase, found in Prochlorococcus marinus (strain NATL2A).